The chain runs to 233 residues: 2-C-methyl-D-erythritol 4-phosphate cytidylyltransferase (233 aa).

It belongs to the IspD/TarI cytidylyltransferase family. IspD subfamily.

It carries out the reaction 2-C-methyl-D-erythritol 4-phosphate + CTP + H(+) = 4-CDP-2-C-methyl-D-erythritol + diphosphate. Its pathway is isoprenoid biosynthesis; isopentenyl diphosphate biosynthesis via DXP pathway; isopentenyl diphosphate from 1-deoxy-D-xylulose 5-phosphate: step 2/6. Its function is as follows. Catalyzes the formation of 4-diphosphocytidyl-2-C-methyl-D-erythritol from CTP and 2-C-methyl-D-erythritol 4-phosphate (MEP). The chain is 2-C-methyl-D-erythritol 4-phosphate cytidylyltransferase from Thiobacillus denitrificans (strain ATCC 25259 / T1).